The primary structure comprises 293 residues: Exosome complex component RRP4 (293 aa).

The region spanning 79–159 (EVGDIVVGRI…SDGAVSLHTR (81 aa)) is the S1 motif domain. S124 carries the post-translational modification Phosphoserine.

The protein belongs to the RRP4 family. In terms of assembly, component of the RNA exosome core complex (Exo-9), composed of EXOSC1, EXOSC2, EXOSC3, EXOSC4, EXOSC5, EXOSC6, EXOSC7, EXOSC8 and EXOSC9; within the complex interacts with EXOSC4 and EXOSC7. The catalytically inactive RNA exosome core complex (Exo-9) associates with the catalytic subunit EXOSC10/RRP6. Exo-9 may associate with DIS3 to form the nucleolar exosome complex, or DIS3L to form the cytoplasmic exosome complex. Exo-9 is formed by a hexameric base ring consisting of the heterodimers EXOSC4-EXOSC9, EXOSC5-EXOSC8 and EXOSC6-EXOSC7, and a cap ring consisting of EXOSC1, EXOSC2 and EXOSC3. The RNA exosome complex associates with cofactors C1D/RRP47, MPHOSPH6/MPP6 and MTREX/MTR4. Interacts with GTPBP1. Interacts with ZFP36L1 (via N-terminus).

The protein resides in the cytoplasm. The protein localises to the nucleus. It localises to the nucleolus. In terms of biological role, non-catalytic component of the RNA exosome complex which has 3'-&gt;5' exoribonuclease activity and participates in a multitude of cellular RNA processing and degradation events. In the nucleus, the RNA exosome complex is involved in proper maturation of stable RNA species such as rRNA, snRNA and snoRNA, in the elimination of RNA processing by-products and non-coding 'pervasive' transcripts, such as antisense RNA species and promoter-upstream transcripts (PROMPTs), and of mRNAs with processing defects, thereby limiting or excluding their export to the cytoplasm. The RNA exosome may be involved in Ig class switch recombination (CSR) and/or Ig variable region somatic hypermutation (SHM) by targeting AICDA deamination activity to transcribed dsDNA substrates. In the cytoplasm, the RNA exosome complex is involved in general mRNA turnover and specifically degrades inherently unstable mRNAs containing AU-rich elements (AREs) within their 3' untranslated regions, and in RNA surveillance pathways, preventing translation of aberrant mRNAs. It seems to be involved in degradation of histone mRNA. The catalytic inactive RNA exosome core complex of 9 subunits (Exo-9) is proposed to play a pivotal role in the binding and presentation of RNA for ribonucleolysis, and to serve as a scaffold for the association with catalytic subunits and accessory proteins or complexes. EXOSC2 as peripheral part of the Exo-9 complex stabilizes the hexameric ring of RNase PH-domain subunits through contacts with EXOSC4 and EXOSC7. This chain is Exosome complex component RRP4 (EXOSC2), found in Bos taurus (Bovine).